The following is a 350-amino-acid chain: S-adenosylmethionine:tRNA ribosyltransferase-isomerase (350 aa).

The protein belongs to the QueA family. In terms of assembly, monomer.

It is found in the cytoplasm. The catalysed reaction is 7-aminomethyl-7-carbaguanosine(34) in tRNA + S-adenosyl-L-methionine = epoxyqueuosine(34) in tRNA + adenine + L-methionine + 2 H(+). Its pathway is tRNA modification; tRNA-queuosine biosynthesis. In terms of biological role, transfers and isomerizes the ribose moiety from AdoMet to the 7-aminomethyl group of 7-deazaguanine (preQ1-tRNA) to give epoxyqueuosine (oQ-tRNA). The polypeptide is S-adenosylmethionine:tRNA ribosyltransferase-isomerase (Vibrio parahaemolyticus serotype O3:K6 (strain RIMD 2210633)).